The sequence spans 341 residues: Phosphate acyltransferase (341 aa).

Belongs to the PlsX family. As to quaternary structure, homodimer. Probably interacts with PlsY.

It is found in the cytoplasm. It catalyses the reaction a fatty acyl-[ACP] + phosphate = an acyl phosphate + holo-[ACP]. It participates in lipid metabolism; phospholipid metabolism. Functionally, catalyzes the reversible formation of acyl-phosphate (acyl-PO(4)) from acyl-[acyl-carrier-protein] (acyl-ACP). This enzyme utilizes acyl-ACP as fatty acyl donor, but not acyl-CoA. The protein is Phosphate acyltransferase of Vibrio atlanticus (strain LGP32) (Vibrio splendidus (strain Mel32)).